The sequence spans 207 residues: Large ribosomal subunit protein uL4 (207 aa).

A disordered region spans residues Lys-62 to Gly-85.

The protein belongs to the universal ribosomal protein uL4 family. Part of the 50S ribosomal subunit.

In terms of biological role, one of the primary rRNA binding proteins, this protein initially binds near the 5'-end of the 23S rRNA. It is important during the early stages of 50S assembly. It makes multiple contacts with different domains of the 23S rRNA in the assembled 50S subunit and ribosome. Its function is as follows. Forms part of the polypeptide exit tunnel. This is Large ribosomal subunit protein uL4 from Geobacter sp. (strain M21).